Reading from the N-terminus, the 539-residue chain is MSELEQIRLANIERNKALLAALNLPTEAKKESVDPEVAPKKSRKRNSARLESPDDGSDDSAPRTRRKSRRLQGLDPEANALKQEDLGGSGELKRLMQQLNGGVKKERLSGDLSLKEMLTKTGLDEKEWSASLGQLFGDGSRVSQGDFFDEIVKKEEEDTKDIDIKQSRDNLSGLQLGKMSKVTKERIYITAVHPGTDKRIVLAGDKIGVLGIWDVDSDNEPLQLQLHHATIPALCFDQNSNDILYSASYDGSVRSLELKTGKSGDVLDLEAKKNASVGVSDVANPQPHLLYASTLCGHLIRKDLRTKSTEYETLILGEKKIGGFSVDPINTHLLATGSLDRSMRIWDLRATETARTIPGGEVIDTQFQMPHLQAIYNSRLSVSSTDWNLAGQIVCNGYDDTINIFNQSDYFLDMLNDGNGTEPVKKTRRTRNSKLAEPEISDQELPEIKKPSVRIKHNCQTGRWVTILKARWQQQPLDGVQKFAIANMNRYIDIYSGTGHQLAHLGDALMTAVPSALAFHPTQNWIAGGNSSGKMYWWE.

The segment at 22–89 is disordered; sequence LNLPTEAKKE…ALKQEDLGGS (68 aa). The segment covering 27–39 has biased composition (basic and acidic residues); that stretch reads EAKKESVDPEVAP. WD repeat units follow at residues 182–223, 226–268, 316–356, 377–415, 462–505, and 508–539; these read VTKE…EPLQ, LHHA…DVLD, LGEK…TART, NSRLSVSSTDWNLAGQIVCNGYDDTINIFNQSDYFLDML, GRWV…LAHL, and ALMTAVPSALAFHPTQNWIAGGNSSGKMYWWE.

It belongs to the WD repeat DDB2/WDR76 family.

In terms of biological role, DNA-binding protein that binds to both single- and double-stranded DNA. Binds preferentially to UV-damaged DNA. May be involved in DNA-metabolic processes. In Yarrowia lipolytica (strain CLIB 122 / E 150) (Yeast), this protein is DNA damage-binding protein CMR1.